The following is a 489-amino-acid chain: 3-octaprenyl-4-hydroxybenzoate carboxy-lyase (489 aa).

Asparagine 172 provides a ligand contact to Mn(2+). Residues isoleucine 175 to arginine 177, arginine 189 to leucine 191, and arginine 194 to glycine 195 contribute to the prenylated FMN site. A Mn(2+)-binding site is contributed by glutamate 238. The active-site Proton donor is aspartate 287.

Belongs to the UbiD family. In terms of assembly, homohexamer. Prenylated FMN serves as cofactor. The cofactor is Mn(2+).

Its subcellular location is the cell membrane. It catalyses the reaction a 4-hydroxy-3-(all-trans-polyprenyl)benzoate + H(+) = a 2-(all-trans-polyprenyl)phenol + CO2. It functions in the pathway cofactor biosynthesis; ubiquinone biosynthesis. Functionally, catalyzes the decarboxylation of 3-octaprenyl-4-hydroxy benzoate to 2-octaprenylphenol, an intermediate step in ubiquinone biosynthesis. This Psychromonas ingrahamii (strain DSM 17664 / CCUG 51855 / 37) protein is 3-octaprenyl-4-hydroxybenzoate carboxy-lyase.